We begin with the raw amino-acid sequence, 552 residues long: Putative transport protein YPTS_4123 (552 aa).

A run of 6 helical transmembrane segments spans residues 1–21 (MSAI…GLWI), 26–46 (IYGV…VGHF), 65–85 (FGLI…FFSS), 96–116 (FAIL…KLFA), 119–139 (LPII…LGAA), and 158–178 (MGYA…MWLI). 2 RCK C-terminal domains span residues 192 to 276 (AFDS…VVGE) and 279 to 361 (DVTL…IVGN). The next 6 helical transmembrane spans lie at 371-391 (MLPV…PLFV), 393-413 (GFPA…ALIL), 439-459 (IVLF…NTLV), 464-484 (LAWI…VGIL), 493-513 (YLTL…LAFA), and 530-550 (VYPL…VLFW).

Belongs to the AAE transporter (TC 2.A.81) family. YidE subfamily.

It is found in the cell membrane. The protein is Putative transport protein YPTS_4123 of Yersinia pseudotuberculosis serotype IB (strain PB1/+).